A 2843-amino-acid polypeptide reads, in one-letter code: Adenomatous polyposis coli protein (2843 aa).

Ala2 is subject to N-acetylalanine. The stretch at 2–61 (AAASYDQLLKQVEALKMENSNLRQELEDNSNHLTKLETEASNMKEVLKQLQGSIEDEAMA) forms a coiled coil. A phosphoserine mark is found at Ser107 and Ser111. Residues 127-248 (SRESTGYLEE…ATEAERSSQN (122 aa)) are a coiled coil. The tract at residues 239-305 (ATEAERSSQN…STHSAPRRLT (67 aa)) is disordered. Basic and acidic residues predominate over residues 241 to 261 (EAERSSQNKHETGSHDAERQN). Residues 271–282 (MATSGNGQGSTT) are compositionally biased toward polar residues. Positions 290-299 (SVLSSSSTHS) are enriched in low complexity. ARM repeat units lie at residues 453-495 (LMKL…HYSI), 505-547 (LTNL…IASV), 548-591 (LRNL…VLSA), 592-638 (LWNL…GGGI), 639-683 (LRNV…ACGT), 684-725 (LWNL…SAAA), and 726-767 (LRNL…LDAQ). Residues Ser744, Ser748, and Ser780 each carry the phosphoserine modification. The interval 828–878 (TTVLPSSSSSRGSLDSSRSEKDRSLERERGIGLGNYHPATENPGTSSKRGL) is disordered. Residues 833-843 (SSSSSRGSLDS) are compositionally biased toward low complexity. Positions 844–857 (SRSEKDRSLERERG) are enriched in basic and acidic residues. Positions 869–878 (NPGTSSKRGL) are enriched in polar residues. Residue Ser908 is modified to Phosphoserine. Disordered regions lie at residues 923-943 (RRSS…SENS) and 958-987 (RSSN…ESYS). Polar residues predominate over residues 927-943 (AAHTHSNTYNFTKSENS). The interval 960 to 1337 (SNDSLNSVSS…QHPRTKSSRL (378 aa)) is responsible for down-regulation through a process mediated by direct ubiquitination. A compositionally biased stretch (low complexity) spans 961 to 971 (NDSLNSVSSSD). Ser987, Ser1038, and Ser1042 each carry phosphoserine. The tract at residues 1020 to 1169 (ELDTPINYSL…TNYSIKYNEE (150 aa)) is interaction with catenins. 3 disordered regions span residues 1099–1169 (VSPY…YNEE), 1190–1244 (SQKQ…GQPQ), and 1311–1376 (IGTR…PEHY). Over residues 1107 to 1130 (ANGSETNRVGSNHGINQNVSQSLC) the composition is skewed to polar residues. Residues 1146–1159 (RYSEEEQHEEEERP) are compositionally biased toward basic and acidic residues. Positions 1190–1224 (SQKQSFSFSKSSSGQSSKTEHMSSSSENTSTPSSN) are enriched in low complexity. Positions 1225–1244 (AKRQNQLHPSSAQSRSGQPQ) are enriched in polar residues. Low complexity-rich tracts occupy residues 1335-1345 (SRLQGSSLSSE) and 1355-1366 (SSGAKSPSKSGA). Phosphoserine is present on residues Ser1360, Ser1371, Ser1385, Ser1392, and Ser1395. Disordered regions lie at residues 1403 to 1475 (SSVQ…VNAA), 1526 to 1569 (PPVQ…DSDD), 1583 to 1611 (MPTK…KPSQ), 1664 to 1717 (SPPN…DDNK), and 1729 to 1836 (NSAM…RVRG). Thr1438 is modified (phosphothreonine). 2 stretches are compositionally biased toward basic and acidic residues: residues 1448-1466 (TKRE…RESG) and 1540-1564 (EQPK…KDLL). Ser1567 carries the phosphoserine modification. Basic and acidic residues predominate over residues 1683–1698 (EFEKRDTIPTEGRSTD). Residues 1735 to 1744 (GKSHKPFRVK) are compositionally biased toward basic residues. Ser1774 carries the phosphoserine modification. Basic and acidic residues-rich tracts occupy residues 1785–1794 (YRTRVRKNAD) and 1804–1813 (VFSDNKDSKK). Ser1861, Ser1863, and Ser1864 each carry phosphoserine. The segment at 1866 to 1893 (DFDDDDVDLSREKAELRKAKENKESEAK) is highly charged. The segment covering 1881–1896 (LRKAKENKESEAKVTS) has biased composition (basic and acidic residues). 3 disordered regions span residues 1881–1950 (LRKA…TDEK), 1965–2011 (HNSS…APKS), and 2043–2072 (ISSA…GGIL). Composition is skewed to polar residues over residues 1897-1913 (HTEL…TQAI) and 1928-1938 (QKQSTFPQSSK). The span at 1939–1950 (DIPDRGAATDEK) shows a compositional bias: basic and acidic residues. Residues Ser1971 and Ser1973 each carry the phosphoserine modification. Residues 1979 to 1991 (NNNKENEPIKETE) show a composition bias toward basic and acidic residues. Residues 2035 to 2059 (EDDLLQECISSAMPKKKKPSRLKGD) form an interaction with AXIN1 region. Phosphoserine occurs at positions 2088, 2093, 2125, 2129, 2130, and 2132. Disordered regions lie at residues 2147 to 2635 (PFHL…SGAT) and 2667 to 2714 (NNPR…VPMR). The residue at position 2151 (Thr2151) is a Phosphothreonine. The tract at residues 2167–2674 (ILKPGEKSTL…PINNPRSGRS (508 aa)) is basic region. Residues 2169-2187 (KPGEKSTLETKKIESESKG) show a composition bias toward basic and acidic residues. 2 stretches are compositionally biased toward polar residues: residues 2203-2223 (VRSN…NMPS) and 2257-2271 (ASKS…TTSP). A phosphoserine mark is found at Ser2260, Ser2270, and Ser2283. Over residues 2286-2331 (ARQTSQIGGSSKAPSRSGSRDSTPSRPAQQPLSRPIQSPGRNSISP) the composition is skewed to polar residues. Over residues 2348–2369 (TSSPSTASTKSSGSGKMSYTSP) the composition is skewed to low complexity. Composition is skewed to polar residues over residues 2370 to 2409 (GRQM…NGNG) and 2418 to 2427 (RMSSTKSSGS). Residues 2459–2477 (SASFESLSPSSRPASPTRS) are compositionally biased toward low complexity. 2 positions are modified to phosphoserine: Ser2473 and Ser2535. The tract at residues 2475–2843 (TRSQAQTPVL…HSGSYLVTSV (369 aa)) is interaction with DLG1. A compositionally biased stretch (basic and acidic residues) spans 2518 to 2535 (NDGRPAKRHDIARSHSES). Positions 2555-2568 (SSSLPRVSTWRRTG) are enriched in polar residues. Phosphoserine is present on Ser2569. Over residues 2569 to 2579 (SSSSILSASSE) the composition is skewed to low complexity. The segment covering 2580 to 2592 (SSEKAKSEDEKHV) has biased composition (basic and acidic residues). Composition is skewed to polar residues over residues 2593 to 2608 (NSIS…QVSA), 2620 to 2635 (FSPT…SGAT), and 2668 to 2679 (NPRSGRSPTGNT). Ser2671 and Ser2674 each carry phosphoserine. The interaction with MAPRE1 stretch occupies residues 2674–2843 (SPTGNTPPVI…HSGSYLVTSV (170 aa)). Thr2679 bears the Phosphothreonine mark. Residues Ser2710 and Ser2724 each carry the phosphoserine modification. A disordered region spans residues 2729–2843 (DAPDQKGTEI…HSGSYLVTSV (115 aa)). The span at 2741 to 2757 (GQNNPVPVSETNESSIV) shows a compositional bias: polar residues. Over residues 2763–2774 (SSSSSSKHSSPS) the composition is skewed to low complexity. Positions 2784-2812 (FNYNPSPRKSSADSTSARPSQIPTPVNNN) are enriched in polar residues. Position 2789 is a phosphoserine (Ser2789). Residues 2803-2806 (SQIP) carry the Microtubule tip localization signal motif. A PDZ-binding motif is present at residues 2841–2843 (TSV).

The protein belongs to the adenomatous polyposis coli (APC) family. Forms homooligomers. Found in a complex consisting of ARHGEF4, APC and CTNNB1. Found in a complex composed of MACF1, APC, AXIN1, CTNNB1 and GSK3B. The complex composed, at least, of APC, CTNNB1 and GSK3B interacts with JPT1; the interaction requires the inactive form of GSK3B (phosphorylated at 'Ser-9'). Interacts with APC2. Interacts with DLG1 (via PDZ domains) and DLG3 (via PDZ domains). Interacts with alpha- and beta-catenins. Interacts with AXIN1 (via RGS domain). Interacts with ARHGEF4 (via N-terminus). Interacts (via C-terminal residues 2674-2843) with MAPRE1 (via C-terminal residues 206-211); the interaction inhibits association with and bundling of F-actin. Interacts with MAPRE2 and MAPRE3 (via C-terminus). Interacts with DIAPH1; DIAPH1 acts as a scaffold protein for MAPRE1 and APC to stabilize microtubules and promote cell migration. Interacts with DIAPH2. Interacts with SCRIB; may mediate APC targeting to adherens junctions of epithelial cells. Interacts with SPATA13 (via N-terminus and SH3 domain). Interacts with ASAP1 (via SH3 domain). Interacts (at the cell membrane) with AMER1 and AMER2 (via ARM repeats). Interacts with KHDRBS1. Interacts with actin; binds both to F-actin and actin filament bundles. Phosphorylated; phosphorylation enhances the F-actin bundling activity. Phosphorylated by GSK3B. In terms of processing, ubiquitinated, leading to its degradation by the proteasome. Ubiquitination is facilitated by Axin. Deubiquitinated by ZRANB1/TRABID. In terms of tissue distribution, expressed in a variety of tissues: brain, small intestine, colon, thymus, skeletal muscle, heart, prostate, lung, spleen, ovary, testis kidney, placenta, blood and liver. Isoform 1A: Very strongly expressed in brain but has relatively low expression levels in other tissues. Isoform 1B: Predominant form in all tissues except for brain, including gastric mucosa and blood.

The protein resides in the cell junction. It localises to the adherens junction. The protein localises to the cytoplasm. It is found in the cytoskeleton. Its subcellular location is the cell projection. The protein resides in the lamellipodium. It localises to the ruffle membrane. The protein localises to the cell membrane. In terms of biological role, tumor suppressor. Promotes rapid degradation of CTNNB1 and participates in Wnt signaling as a negative regulator. APC activity is correlated with its phosphorylation state. Activates the GEF activity of SPATA13 and ARHGEF4. Plays a role in hepatocyte growth factor (HGF)-induced cell migration. Required for MMP9 up-regulation via the JNK signaling pathway in colorectal tumor cells. Associates with both microtubules and actin filaments, components of the cytoskeleton. Plays a role in mediating the organization of F-actin into ordered bundles. Functions downstream of Rho GTPases and DIAPH1 to selectively stabilize microtubules. Acts as a mediator of ERBB2-dependent stabilization of microtubules at the cell cortex. It is required for the localization of MACF1 to the cell membrane and this localization of MACF1 is critical for its function in microtubule stabilization. This Homo sapiens (Human) protein is Adenomatous polyposis coli protein.